A 398-amino-acid polypeptide reads, in one-letter code: 4-hydroxy-3-methylbut-2-enyl diphosphate reductase (398 aa).

Residue cysteine 66 participates in [4Fe-4S] cluster binding. Histidine 96 serves as a coordination point for (2E)-4-hydroxy-3-methylbut-2-enyl diphosphate. Histidine 96 is a binding site for dimethylallyl diphosphate. An isopentenyl diphosphate-binding site is contributed by histidine 96. Cysteine 157 provides a ligand contact to [4Fe-4S] cluster. Histidine 185 provides a ligand contact to (2E)-4-hydroxy-3-methylbut-2-enyl diphosphate. Histidine 185 serves as a coordination point for dimethylallyl diphosphate. Histidine 185 lines the isopentenyl diphosphate pocket. Glutamate 187 (proton donor) is an active-site residue. Position 250 (threonine 250) interacts with (2E)-4-hydroxy-3-methylbut-2-enyl diphosphate. Cysteine 288 lines the [4Fe-4S] cluster pocket. Positions 317, 318, 319, and 380 each coordinate (2E)-4-hydroxy-3-methylbut-2-enyl diphosphate. Dimethylallyl diphosphate-binding residues include serine 317, serine 318, asparagine 319, and serine 380. Residues serine 317, serine 318, asparagine 319, and serine 380 each coordinate isopentenyl diphosphate.

It belongs to the IspH family. [4Fe-4S] cluster is required as a cofactor.

It carries out the reaction isopentenyl diphosphate + 2 oxidized [2Fe-2S]-[ferredoxin] + H2O = (2E)-4-hydroxy-3-methylbut-2-enyl diphosphate + 2 reduced [2Fe-2S]-[ferredoxin] + 2 H(+). It catalyses the reaction dimethylallyl diphosphate + 2 oxidized [2Fe-2S]-[ferredoxin] + H2O = (2E)-4-hydroxy-3-methylbut-2-enyl diphosphate + 2 reduced [2Fe-2S]-[ferredoxin] + 2 H(+). It functions in the pathway isoprenoid biosynthesis; dimethylallyl diphosphate biosynthesis; dimethylallyl diphosphate from (2E)-4-hydroxy-3-methylbutenyl diphosphate: step 1/1. The protein operates within isoprenoid biosynthesis; isopentenyl diphosphate biosynthesis via DXP pathway; isopentenyl diphosphate from 1-deoxy-D-xylulose 5-phosphate: step 6/6. Functionally, catalyzes the conversion of 1-hydroxy-2-methyl-2-(E)-butenyl 4-diphosphate (HMBPP) into a mixture of isopentenyl diphosphate (IPP) and dimethylallyl diphosphate (DMAPP). Acts in the terminal step of the DOXP/MEP pathway for isoprenoid precursor biosynthesis. The polypeptide is 4-hydroxy-3-methylbut-2-enyl diphosphate reductase (Prochlorococcus marinus (strain MIT 9301)).